A 325-amino-acid polypeptide reads, in one-letter code: Protein translocase subunit SecF (325 aa).

Helical transmembrane passes span 36–56 (GYIL…TKGF), 148–168 (LAQG…IYVG), 175–197 (LGFG…FSAL), 202–224 (DLTF…IVVF), 254–274 (TIIT…FGGP), and 281–301 (LALL…AIAI).

The protein belongs to the SecD/SecF family. SecF subfamily. As to quaternary structure, forms a complex with SecD. Part of the essential Sec protein translocation apparatus which comprises SecA, SecYEG and auxiliary proteins SecDF-YajC and YidC.

The protein resides in the cell inner membrane. In terms of biological role, part of the Sec protein translocase complex. Interacts with the SecYEG preprotein conducting channel. SecDF uses the proton motive force (PMF) to complete protein translocation after the ATP-dependent function of SecA. This chain is Protein translocase subunit SecF, found in Haemophilus influenzae (strain ATCC 51907 / DSM 11121 / KW20 / Rd).